We begin with the raw amino-acid sequence, 158 residues long: 6,7-dimethyl-8-ribityllumazine synthase (158 aa).

5-amino-6-(D-ribitylamino)uracil is bound by residues phenylalanine 22, 57-59 (SYE), and 81-83 (TVI). The active-site Proton donor is the histidine 89. Phenylalanine 114 contacts 5-amino-6-(D-ribitylamino)uracil. Arginine 128 serves as a coordination point for (2S)-2-hydroxy-3-oxobutyl phosphate.

This sequence belongs to the DMRL synthase family. In terms of assembly, forms an icosahedral capsid composed of 60 subunits, arranged as a dodecamer of pentamers.

It catalyses the reaction (2S)-2-hydroxy-3-oxobutyl phosphate + 5-amino-6-(D-ribitylamino)uracil = 6,7-dimethyl-8-(1-D-ribityl)lumazine + phosphate + 2 H2O + H(+). It functions in the pathway cofactor biosynthesis; riboflavin biosynthesis; riboflavin from 2-hydroxy-3-oxobutyl phosphate and 5-amino-6-(D-ribitylamino)uracil: step 1/2. Functionally, catalyzes the formation of 6,7-dimethyl-8-ribityllumazine by condensation of 5-amino-6-(D-ribitylamino)uracil with 3,4-dihydroxy-2-butanone 4-phosphate. This is the penultimate step in the biosynthesis of riboflavin. The chain is 6,7-dimethyl-8-ribityllumazine synthase from Blochmanniella pennsylvanica (strain BPEN).